A 309-amino-acid polypeptide reads, in one-letter code: 4-hydroxy-3-methylbut-2-enyl diphosphate reductase (309 aa).

C13 lines the [4Fe-4S] cluster pocket. (2E)-4-hydroxy-3-methylbut-2-enyl diphosphate is bound by residues H42 and H75. H42 and H75 together coordinate dimethylallyl diphosphate. Residues H42 and H75 each coordinate isopentenyl diphosphate. C97 provides a ligand contact to [4Fe-4S] cluster. H125 is a binding site for (2E)-4-hydroxy-3-methylbut-2-enyl diphosphate. H125 is a binding site for dimethylallyl diphosphate. Residue H125 participates in isopentenyl diphosphate binding. E127 acts as the Proton donor in catalysis. T165 is a binding site for (2E)-4-hydroxy-3-methylbut-2-enyl diphosphate. C195 lines the [4Fe-4S] cluster pocket. (2E)-4-hydroxy-3-methylbut-2-enyl diphosphate-binding residues include S223, S224, N225, and S267. S223, S224, N225, and S267 together coordinate dimethylallyl diphosphate. S223, S224, N225, and S267 together coordinate isopentenyl diphosphate.

This sequence belongs to the IspH family. Requires [4Fe-4S] cluster as cofactor.

The catalysed reaction is isopentenyl diphosphate + 2 oxidized [2Fe-2S]-[ferredoxin] + H2O = (2E)-4-hydroxy-3-methylbut-2-enyl diphosphate + 2 reduced [2Fe-2S]-[ferredoxin] + 2 H(+). The enzyme catalyses dimethylallyl diphosphate + 2 oxidized [2Fe-2S]-[ferredoxin] + H2O = (2E)-4-hydroxy-3-methylbut-2-enyl diphosphate + 2 reduced [2Fe-2S]-[ferredoxin] + 2 H(+). It functions in the pathway isoprenoid biosynthesis; dimethylallyl diphosphate biosynthesis; dimethylallyl diphosphate from (2E)-4-hydroxy-3-methylbutenyl diphosphate: step 1/1. The protein operates within isoprenoid biosynthesis; isopentenyl diphosphate biosynthesis via DXP pathway; isopentenyl diphosphate from 1-deoxy-D-xylulose 5-phosphate: step 6/6. Catalyzes the conversion of 1-hydroxy-2-methyl-2-(E)-butenyl 4-diphosphate (HMBPP) into a mixture of isopentenyl diphosphate (IPP) and dimethylallyl diphosphate (DMAPP). Acts in the terminal step of the DOXP/MEP pathway for isoprenoid precursor biosynthesis. The chain is 4-hydroxy-3-methylbut-2-enyl diphosphate reductase from Chlamydia felis (strain Fe/C-56) (Chlamydophila felis).